Reading from the N-terminus, the 500-residue chain is NAD(P)H-quinone oxidoreductase chain 4, chloroplastic (500 aa).

Transmembrane regions (helical) follow at residues 4-24 (FPWL…IFFL), 35-55 (YTIF…CYHF), 87-107 (IGPI…AWPV), 113-130 (LFNF…GLFS), 134-154 (LLLF…LLSM), 167-187 (FILY…GIGL), 211-231 (IIFY…IPLH), 242-262 (HYST…YGLV), 272-292 (AHSI…IYAA), 305-325 (IAYS…SITD), 330-350 (GALL…FLAG), 364-384 (MGGI…FSMA), 386-406 (LALP…GIIT), 416-436 (ILIT…SLSM), and 463-483 (FLSI…DFIF).

Belongs to the complex I subunit 4 family.

It is found in the plastid. The protein localises to the chloroplast thylakoid membrane. The catalysed reaction is a plastoquinone + NADH + (n+1) H(+)(in) = a plastoquinol + NAD(+) + n H(+)(out). The enzyme catalyses a plastoquinone + NADPH + (n+1) H(+)(in) = a plastoquinol + NADP(+) + n H(+)(out). The polypeptide is NAD(P)H-quinone oxidoreductase chain 4, chloroplastic (Coffea arabica (Arabian coffee)).